A 247-amino-acid chain; its full sequence is Fibroblast growth factor 14 (247 aa).

Disordered regions lie at residues 1–38 (MAAA…KNRG) and 216–247 (ETVP…CKTT). The segment covering 15–25 (QAREQHWDRPS) has biased composition (basic and acidic residues).

The protein belongs to the heparin-binding growth factors family. In terms of assembly, interacts with SCN8A.

The protein localises to the nucleus. Its function is as follows. Probably involved in nervous system development and function. The sequence is that of Fibroblast growth factor 14 (Fgf14) from Rattus norvegicus (Rat).